A 195-amino-acid chain; its full sequence is Protein lin-28 homolog A (195 aa).

Residues 33–106 form the CSD domain; the sequence is QGSGVCKWFN…GLESTRVTGP (74 aa). The tract at residues 98 to 126 is disordered; that stretch reads LESTRVTGPGGAPCIGSERRPKVKGQQKR. Residues 107 to 130 form a flexible linker region; that stretch reads GGAPCIGSERRPKVKGQQKRRQKG. 2 CCHC-type zinc fingers span residues 131 to 148 and 153 to 170; these read DRCY…ECKL and KKCH…QCPA. Residues C133, C136, H141, C146, C155, C158, H163, and C168 each contribute to the Zn(2+) site. The segment at 175–195 is disordered; that stretch reads AANLEEQPISEEQELIPETME. Over residues 182 to 195 the composition is skewed to acidic residues; that stretch reads PISEEQELIPETME.

It belongs to the lin-28 family. In terms of assembly, monomer.

It localises to the cytoplasm. The protein resides in the rough endoplasmic reticulum. The protein localises to the P-body. Its subcellular location is the stress granule. It is found in the nucleus. It localises to the nucleolus. Its function is as follows. RNA-binding protein that inhibits processing of pre-let-7 miRNAs and regulates translation of mRNAs that control developmental timing, pluripotency and metabolism. Seems to recognize a common structural G-quartet (G4) feature in its miRNA and mRNA targets. 'Translational enhancer' that drives specific mRNAs to polysomes and increases the efficiency of protein synthesis. Its association with the translational machinery and target mRNAs results in an increased number of initiation events per molecule of mRNA and, indirectly, in mRNA stabilization. Suppressor of microRNA (miRNA) biogenesis, including that of let-7. Binds specific target miRNA precursors (pre-miRNAs), recognizing an 5'-GGAG-3' motif found in their terminal loop, and recruits uridylyltransferase. This results in the terminal uridylation of target pre-miRNAs. Uridylated pre-miRNAs fail to be processed by Dicer and undergo degradation. Localized to the periendoplasmic reticulum area, binds to a large number of spliced mRNAs and inhibits the translation of mRNAs destined for the ER, reducing the synthesis of transmembrane proteins, ER or Golgi lumen proteins, and secretory proteins. Binds to and enhances the translation of mRNAs for several metabolic enzymes, increasing glycolysis and oxidative phosphorylation. Which, with the let-7 repression may enhance tissue repair in adult tissue. The protein is Protein lin-28 homolog A (lin28a) of Xenopus tropicalis (Western clawed frog).